We begin with the raw amino-acid sequence, 264 residues long: 14-3-3 protein homolog (264 aa).

The span at 236 to 258 shows a compositional bias: low complexity; the sequence is SEAPAATEEQQQSSQAPAAQPTE. The tract at residues 236 to 264 is disordered; the sequence is SEAPAATEEQQQSSQAPAAQPTEGKADQE.

Belongs to the 14-3-3 family.

In Candida albicans (strain SC5314 / ATCC MYA-2876) (Yeast), this protein is 14-3-3 protein homolog (BMH1).